The following is a 364-amino-acid chain: UDP-arabinopyranose mutase 1 (364 aa).

Positions 110–112 match the DXD motif motif; sequence DDD. Residue Arg-158 is glycosylated (N-linked (Glc...) arginine).

The protein belongs to the RGP family. Heteromers with UAM2 and UAM3. It depends on Mn(2+) as a cofactor. Mg(2+) is required as a cofactor. In terms of processing, reversibly glycosylated in vitro at Arg-158 by UDP-glucose. Reversibly glycosylated by UDP-xylose and UDP-galactose.

It is found in the golgi apparatus. The enzyme catalyses UDP-beta-L-arabinofuranose = UDP-beta-L-arabinopyranose. Its function is as follows. UDP-L-arabinose mutase involved in the biosynthesis of cell wall non-cellulosic polysaccharides. Catalyzes the interconvertion of UDP-L-arabinopyranose (UDP-Arap) and UDP-L-arabinofuranose (UDP-Araf). Preferentially catalyzes the formation of UDP-Arap from UDP-Araf. At thermodynamic equilibrium in vitro the ratio of the pyranose form over the furanose form is 90:10. Is probably active as heteromer in vivo. This is UDP-arabinopyranose mutase 1 from Oryza sativa subsp. japonica (Rice).